A 1411-amino-acid polypeptide reads, in one-letter code: Tectonin beta-propeller repeat-containing protein 2 (1411 aa).

WD repeat units lie at residues 23-66, 67-114, 115-161, 162-203, 204-265, 266-309, and 310-343; these read IPTK…HLNQ, MRKY…PGRN, KQLR…LDQG, LCNS…EKSV, RQIG…AGGV, KPFE…EYSI, and YLLDTVNQATVAGLEGSGDIVSVSCTENEIFFLK. Disordered regions lie at residues 379–439, 463–542, 579–637, and 758–779; these read QAEK…GSQP, VKRK…QENT, RELL…GPQS, and YAHGLPSSSSETSVTELGPSCS. The segment covering 400 to 420 has biased composition (low complexity); the sequence is SSVASEPRSRSSSLNSTDSGS. Polar residues-rich tracts occupy residues 475 to 489, 496 to 542, 608 to 621, and 763 to 779; these read GSRSTCHSSLESTPC, SPQS…QENT, PNSTQLPFQEQDSS, and PSSSSETSVTELGPSCS. 6 TECPR repeats span residues 945–976, 994–1027, 1179–1209, 1226–1259, 1279–1310, and 1322–1353; these read NVVWALTEQRALLYREGVSSFCPEGEQWKCDI, QTLWALDIHGNLWFRTGIISKKPQGDDDHWWQVS, DALWALDSLGQVFIRTLSKSCPTGMHWTRLD, QHIWACDSRGGVYFRVGTQPLNPSLMLPAWIMIE, QMLWVLDSRWNVHVRTGITEEMPVGTAWEHVP, and RTVWARCPNGDLARRYGVTDKNPAGDYWKKIP. Residues 1388–1411 are disordered; sequence HGTQKSSQAAMPHPEDLEDEWEVI.

Belongs to the WD repeat KIAA0329 family. In terms of assembly, interacts with the ATG8 family members GABARAP, GABARAPL1, GABARAPL2, MAP1LC3B and MAP1LC3C. In terms of tissue distribution, detected in skin fibroblast (at protein level).

In terms of biological role, probably plays a role as positive regulator of autophagy. In Homo sapiens (Human), this protein is Tectonin beta-propeller repeat-containing protein 2 (TECPR2).